The primary structure comprises 100 residues: Ubiquinol-cytochrome-C reductase complex subunit IX, mitochondrial (100 aa).

The transit peptide at 1–30 (MQTHVRRVALQALRPCLRAGLMAPKFPVRF) directs the protein to the mitochondrion. The helical transmembrane segment at 66–86 (LLMRLFFAFVAYVVAMKVFGA) threads the bilayer.

Plants bc1 complex contains 10 subunits; 3 respiratory subunits, 2 core proteins and 5 low-molecular weight proteins.

The protein resides in the mitochondrion inner membrane. Functionally, this is a component of the ubiquinol-cytochrome c reductase complex (complex III or cytochrome b-c1 complex), which is part of the mitochondrial respiratory chain. In Euglena gracilis, this protein is Ubiquinol-cytochrome-C reductase complex subunit IX, mitochondrial.